Consider the following 111-residue polypeptide: uncharacterized protein (111 aa).

Helical transmembrane passes span 7–27 (ILNIILALAVPIGLLFISMMI) and 53–73 (AFAMFIPLLIIALTLLVTFLH).

It is found in the cell membrane. This is an uncharacterized protein from Bacillus anthracis.